The primary structure comprises 908 residues: Putative cell signaling protein HAM1 (908 aa).

2 disordered regions span residues 1-24 (MSVA…SAVS) and 177-359 (TKAA…EHRQ). Composition is skewed to basic and acidic residues over residues 179–192 (AADK…KLDS), 231–247 (HPRD…DKGK), 261–283 (AKSD…KETG), 306–321 (EQKE…KRDA), and 338–359 (NQEK…EHRQ). Positions 255–282 (YNQAQEAKSDAQSKAQDLKSSARDYKET) form a coiled coil.

Palmitoylated.

Its function is as follows. May act as a negative regulator of mating during vegetative growth. This is Putative cell signaling protein HAM1 from Cryptococcus neoformans var. grubii serotype A (strain H99 / ATCC 208821 / CBS 10515 / FGSC 9487) (Filobasidiella neoformans var. grubii).